Here is a 420-residue protein sequence, read N- to C-terminus: F420-non-reducing hydrogenase vhu subunit A (420 aa).

Residues Cys-61 and Cys-64 each contribute to the Ni(2+) site.

It belongs to the [NiFe]/[NiFeSe] hydrogenase large subunit family. The F420-non-reducing hydrogenase vhu is composed of four subunits; VhuA, VhuD, VhuG and VhuU. It depends on Ni(2+) as a cofactor.

The polypeptide is F420-non-reducing hydrogenase vhu subunit A (vhuA) (Methanococcus voltae).